Consider the following 249-residue polypeptide: Phosphomannomutase 1 (249 aa).

The active-site Nucleophile is the Asp-12. 2 residues coordinate Mg(2+): Asp-12 and Asp-14. Catalysis depends on Asp-14, which acts as the Proton donor/acceptor. 6 residues coordinate alpha-D-mannose 1-phosphate: Arg-21, Arg-123, Arg-134, Arg-141, Ser-179, and Asp-181. Residues Asp-209, Asp-223, and Thr-227 each contribute to the Mg(2+) site.

The protein belongs to the eukaryotic PMM family. In terms of assembly, homodimer.

It is found in the cytoplasm. The enzyme catalyses alpha-D-mannose 1-phosphate = D-mannose 6-phosphate. The protein operates within nucleotide-sugar biosynthesis; GDP-alpha-D-mannose biosynthesis; alpha-D-mannose 1-phosphate from D-fructose 6-phosphate: step 2/2. Functionally, involved in the synthesis of the GDP-mannose and dolichol-phosphate-mannose required for a number of critical mannosyl transfer reactions. The sequence is that of Phosphomannomutase 1 (pmmA) from Dictyostelium discoideum (Social amoeba).